The sequence spans 404 residues: Type II restriction enzyme EcoRII (404 aa).

Tyr308 is a catalytic residue.

Homodimer. It depends on Mg(2+) as a cofactor.

It carries out the reaction Endonucleolytic cleavage of DNA to give specific double-stranded fragments with terminal 5'-phosphates.. Its function is as follows. An E and P subtype restriction enzyme that recognizes the double-stranded sequence 5'-CCWGG-3' and cleaves before C-1. This Escherichia coli protein is Type II restriction enzyme EcoRII (ecoRIIR).